The following is a 271-amino-acid chain: Phosphate import ATP-binding protein PstB (271 aa).

The 243-residue stretch at 24–266 (MIGKDVSVYY…PDDQRTQDYI (243 aa)) folds into the ABC transporter domain. 56 to 63 (GPSGCGKS) contacts ATP.

The protein belongs to the ABC transporter superfamily. Phosphate importer (TC 3.A.1.7) family. As to quaternary structure, the complex is composed of two ATP-binding proteins (PstB), two transmembrane proteins (PstC and PstA) and a solute-binding protein (PstS).

It is found in the cell inner membrane. It catalyses the reaction phosphate(out) + ATP + H2O = ADP + 2 phosphate(in) + H(+). Part of the ABC transporter complex PstSACB involved in phosphate import. Responsible for energy coupling to the transport system. The sequence is that of Phosphate import ATP-binding protein PstB from Agrobacterium fabrum (strain C58 / ATCC 33970) (Agrobacterium tumefaciens (strain C58)).